A 459-amino-acid polypeptide reads, in one-letter code: Transmembrane protein 143 (459 aa).

A run of 2 helical transmembrane segments spans residues 280–300 (LLNL…GMVV) and 301–321 (LTDL…FMGL). A Phosphoserine modification is found at serine 332. Positions 435–459 (GFPKLDPVAPITSEPPQATPSSNIS) are disordered. Residues 448–459 (EPPQATPSSNIS) are compositionally biased toward polar residues.

It localises to the membrane. This Homo sapiens (Human) protein is Transmembrane protein 143 (TMEM143).